Here is a 433-residue protein sequence, read N- to C-terminus: Pyrimidine-nucleoside phosphorylase (433 aa).

81 to 83 is a phosphate binding site; sequence KHS. K(+) is bound by residues Gly-88 and Thr-90. Residues Thr-92, 108 to 110, and Thr-120 contribute to the phosphate site; that span reads KMS. Substrate contacts are provided by Arg-168 and Lys-187. K(+) contacts are provided by Leu-243, Ala-246, and Glu-255.

The protein belongs to the thymidine/pyrimidine-nucleoside phosphorylase family. Homodimer. K(+) serves as cofactor.

It carries out the reaction uridine + phosphate = alpha-D-ribose 1-phosphate + uracil. The catalysed reaction is thymidine + phosphate = 2-deoxy-alpha-D-ribose 1-phosphate + thymine. The enzyme catalyses 2'-deoxyuridine + phosphate = 2-deoxy-alpha-D-ribose 1-phosphate + uracil. In terms of biological role, catalyzes phosphorolysis of the pyrimidine nucleosides uridine, thymidine and 2'-deoxyuridine with the formation of the corresponding pyrimidine base and ribose-1-phosphate. The polypeptide is Pyrimidine-nucleoside phosphorylase (pdp) (Staphylococcus epidermidis (strain ATCC 12228 / FDA PCI 1200)).